Reading from the N-terminus, the 358-residue chain is GTPase Obg (358 aa).

One can recognise an Obg domain in the interval 1-159; sequence MKFLDEAKVY…RWIWLRLKLI (159 aa). The OBG-type G domain maps to 160 to 327; it reads ADAGLVGLPN…VLRALVEVIG (168 aa). GTP is bound by residues 166-173, 191-195, 212-215, 279-282, and 308-310; these read GLPNAGKS, FTTLH, DIPG, NKID, and SGV. Mg(2+)-binding residues include Ser-173 and Thr-193. The interval 335 to 358 is disordered; it reads AKGADASAAQAMETPVARAKPWSP.

It belongs to the TRAFAC class OBG-HflX-like GTPase superfamily. OBG GTPase family. In terms of assembly, monomer. Requires Mg(2+) as cofactor.

Its subcellular location is the cytoplasm. An essential GTPase which binds GTP, GDP and possibly (p)ppGpp with moderate affinity, with high nucleotide exchange rates and a fairly low GTP hydrolysis rate. Plays a role in control of the cell cycle, stress response, ribosome biogenesis and in those bacteria that undergo differentiation, in morphogenesis control. In Nitrobacter winogradskyi (strain ATCC 25391 / DSM 10237 / CIP 104748 / NCIMB 11846 / Nb-255), this protein is GTPase Obg.